We begin with the raw amino-acid sequence, 77 residues long: U8-lycotoxin-Ls1f (77 aa).

Positions 1–20 (MKLIIFTGLVLFAIVSLIEV) are cleaved as a signal peptide. The propeptide occupies 21–26 (QADNER).

The protein belongs to the neurotoxin 19 (CSTX) family. 08 (U8-Lctx) subfamily. Post-translationally, contains 4 disulfide bonds. Expressed by the venom gland.

The protein localises to the secreted. This Lycosa singoriensis (Wolf spider) protein is U8-lycotoxin-Ls1f.